Consider the following 348-residue polypeptide: Fe-S cluster assembly protein DRE2 (348 aa).

The interval 1–162 (MSQYKTGLLL…KKASSSTSNL (162 aa)) is N-terminal SAM-like domain. A disordered region spans residues 137–170 (KTNNTKLQSGSKLPTFKKASSSTSNLPSFKKADH). Residues 144–163 (QSGSKLPTFKKASSSTSNLP) show a composition bias toward polar residues. The interval 163-242 (PSFKKADHSR…EEELIDEDGS (80 aa)) is linker. At S206 the chain carries Phosphoserine. Residues C252, C263, C266, and C268 each coordinate [2Fe-2S] cluster. The segment at 252 to 268 (CGKSKTKKKKACKDCTC) is fe-S binding site A. Positions 311, 314, 322, and 325 each coordinate [4Fe-4S] cluster. 2 short sequence motifs (cx2C motif) span residues 311 to 314 (CGSC) and 322 to 325 (CSGC). Residues 311–325 (CGSCSLGDAFRCSGC) form a fe-S binding site B region.

Belongs to the anamorsin family. Monomer. Interacts with TAH18. Interacts with MIA40. Requires [2Fe-2S] cluster as cofactor. The cofactor is [4Fe-4S] cluster.

The protein resides in the cytoplasm. The protein localises to the mitochondrion intermembrane space. Component of the cytosolic iron-sulfur (Fe-S) protein assembly (CIA) machinery required for the maturation of extramitochondrial Fe-S proteins. Part of an electron transfer chain functioning in an early step of cytosolic Fe-S biogenesis, facilitating the de novo assembly of a [4Fe-4S] cluster on the scaffold complex CFD1-NBP35. Electrons are transferred to DRE2 from NADPH via the FAD- and FMN-containing protein TAH18. TAH18-DRE2 are also required for the assembly of the diferric tyrosyl radical cofactor of ribonucleotide reductase (RNR), probably by providing electrons for reduction during radical cofactor maturation in the catalytic small subunit RNR2. This Saccharomyces cerevisiae (strain Lalvin EC1118 / Prise de mousse) (Baker's yeast) protein is Fe-S cluster assembly protein DRE2.